We begin with the raw amino-acid sequence, 565 residues long: Tyrosine-protein phosphatase non-receptor type 5 (565 aa).

A compositionally biased stretch (basic and acidic residues) spans 1–16 (MNYEGARSERENHAAD). The interval 1–80 (MNYEGARSER…KPPPRGAGSH (80 aa)) is disordered. Positions 56 to 75 (MPPPPPPSPPSDPAQKPPPR) are enriched in pro residues. Helical transmembrane passes span 88–108 (LCLF…FSGY) and 146–166 (LLLV…WHLL). The tract at residues 169 to 189 (PPEPPTPLPPEDRRQSVSRQP) is disordered. Serine 245 bears the Phosphoserine; by PKA mark. At threonine 255 the chain carries Phosphothreonine; by MAPK. Serine 268 carries the phosphoserine; by MAPK modification. Residues 300-555 (LQAEFFEIPM…QFVHHVMSLY (256 aa)) enclose the Tyrosine-protein phosphatase domain. Substrate-binding positions include aspartate 461, 496 to 502 (CSAGIGR), and glutamine 540. Cysteine 496 acts as the Phosphocysteine intermediate in catalysis.

The protein belongs to the protein-tyrosine phosphatase family. Non-receptor class subfamily. Phosphorylation at Ser-245 by PKA deactivates PTPN5. Phosphorylation at Thr-255 and Ser-268 by MAPKs stabilizes the phosphatase, dephosphorylation of these sites results in ubiquitin-mediated degradation of the active phosphatase.

Its subcellular location is the endoplasmic reticulum membrane. The enzyme catalyses O-phospho-L-tyrosyl-[protein] + H2O = L-tyrosyl-[protein] + phosphate. May regulate the activity of several effector molecules involved in synaptic plasticity and neuronal cell survival, including MAPKs, Src family kinases and NMDA receptors. In Homo sapiens (Human), this protein is Tyrosine-protein phosphatase non-receptor type 5 (PTPN5).